The following is a 306-amino-acid chain: Curved DNA-binding protein (306 aa).

Residues Asp-5–Trp-69 form the J domain.

Its subcellular location is the cytoplasm. The protein resides in the nucleoid. DNA-binding protein that preferentially recognizes a curved DNA sequence. It is probably a functional analog of DnaJ; displays overlapping activities with DnaJ, but functions under different conditions, probably acting as a molecular chaperone in an adaptive response to environmental stresses other than heat shock. Lacks autonomous chaperone activity; binds native substrates and targets them for recognition by DnaK. Its activity is inhibited by the binding of CbpM. This chain is Curved DNA-binding protein, found in Escherichia coli O17:K52:H18 (strain UMN026 / ExPEC).